The chain runs to 511 residues: Maturase K (511 aa).

This sequence belongs to the intron maturase 2 family. MatK subfamily.

The protein resides in the plastid. The protein localises to the chloroplast. In terms of biological role, usually encoded in the trnK tRNA gene intron. Probably assists in splicing its own and other chloroplast group II introns. This Bowiea volubilis (Climbing onion) protein is Maturase K.